A 444-amino-acid polypeptide reads, in one-letter code: Alpha-(1,3)-fucosyltransferase B (444 aa).

Residues 1-6 are Cytoplasmic-facing; sequence MRLAQR. Residues 7–27 form a helical; Signal-anchor for type II membrane protein membrane-spanning segment; sequence YGIALVALLMVGATVLFFWSE. Residues 28 to 444 lie on the Lumenal side of the membrane; sequence NIINYENIKF…GNNCSNSSNT (417 aa). N-linked (GlcNAc...) asparagine glycans are attached at residues N279, N437, and N440.

This sequence belongs to the glycosyltransferase 10 family.

It is found in the golgi apparatus. The protein resides in the golgi stack membrane. It participates in protein modification; protein glycosylation. The protein is Alpha-(1,3)-fucosyltransferase B (FucTB) of Drosophila melanogaster (Fruit fly).